The primary structure comprises 305 residues: Serine/threonine-protein phosphatase PP-X isozyme 2 (305 aa).

Positions 51, 53, 79, and 111 each coordinate Mn(2+). The active-site Proton donor is histidine 112. Mn(2+)-binding residues include histidine 161 and histidine 236.

It belongs to the PPP phosphatase family. PP-4 (PP-X) subfamily. The cofactor is Mn(2+). In terms of tissue distribution, ubiquitous, mostly expressed in root mersitems, flowers, and vascular tissues.

The protein localises to the plastid stroma. It carries out the reaction O-phospho-L-seryl-[protein] + H2O = L-seryl-[protein] + phosphate. It catalyses the reaction O-phospho-L-threonyl-[protein] + H2O = L-threonyl-[protein] + phosphate. The polypeptide is Serine/threonine-protein phosphatase PP-X isozyme 2 (PPX2) (Arabidopsis thaliana (Mouse-ear cress)).